The primary structure comprises 625 residues: tRNA uridine 5-carboxymethylaminomethyl modification enzyme MnmG (625 aa).

Residues 11-16 (GAGHAG), Val123, and Ser178 each bind FAD. Position 271–285 (271–285 (GPRYCPSIETKIVTF)) interacts with NAD(+). Gln368 contacts FAD.

This sequence belongs to the MnmG family. In terms of assembly, homodimer. Heterotetramer of two MnmE and two MnmG subunits. FAD serves as cofactor.

It is found in the cytoplasm. Its function is as follows. NAD-binding protein involved in the addition of a carboxymethylaminomethyl (cmnm) group at the wobble position (U34) of certain tRNAs, forming tRNA-cmnm(5)s(2)U34. In Bacteroides fragilis (strain ATCC 25285 / DSM 2151 / CCUG 4856 / JCM 11019 / LMG 10263 / NCTC 9343 / Onslow / VPI 2553 / EN-2), this protein is tRNA uridine 5-carboxymethylaminomethyl modification enzyme MnmG.